The following is a 30-amino-acid chain: Pyrrole-2-carboxylate oxygenase (30 aa).

As to quaternary structure, homotrimer. FAD serves as cofactor.

It carries out the reaction pyrrole-2-carboxylate + NADH + O2 + H(+) = 5-hydroxypyrrole-2-carboxylate + NAD(+) + H2O. In terms of biological role, monooxygenase that initiates the degradation of pyrrole-2-carboxylate, which allows Arthrobacter sp. strain Py1 to grow on pyrrole-2-carboxylate as sole carbon, nitrogen, and energy source. To a lesser extent, can also use pyrrole, pyrrole-2-aldehyde, and indole-2-carboxylate as substrate. This is Pyrrole-2-carboxylate oxygenase from Arthrobacter sp. (strain Py1).